Here is a 334-residue protein sequence, read N- to C-terminus: D-alanine--D-alanine ligase (334 aa).

The region spanning 110–306 (KHVLKSLGID…FDHVVDLIVQ (197 aa)) is the ATP-grasp domain. Position 138-190 (138-190 (LPYPFVIKPVRGGSTIGVHAIFSKSEYLDLSAHADTLEDRMIVEEYVSGQEVQ)) interacts with ATP. Mg(2+) is bound by residues Asp258, Glu272, and Asn274.

Belongs to the D-alanine--D-alanine ligase family. It depends on Mg(2+) as a cofactor. Mn(2+) serves as cofactor.

Its subcellular location is the cytoplasm. The enzyme catalyses 2 D-alanine + ATP = D-alanyl-D-alanine + ADP + phosphate + H(+). It functions in the pathway cell wall biogenesis; peptidoglycan biosynthesis. Its function is as follows. Cell wall formation. The protein is D-alanine--D-alanine ligase of Anaplasma marginale (strain Florida).